Reading from the N-terminus, the 288-residue chain is Bifunctional protein FolD 1 (288 aa).

Residues G170–G172 and I236 each bind NADP(+).

It belongs to the tetrahydrofolate dehydrogenase/cyclohydrolase family. As to quaternary structure, homodimer.

The enzyme catalyses (6R)-5,10-methylene-5,6,7,8-tetrahydrofolate + NADP(+) = (6R)-5,10-methenyltetrahydrofolate + NADPH. It catalyses the reaction (6R)-5,10-methenyltetrahydrofolate + H2O = (6R)-10-formyltetrahydrofolate + H(+). The protein operates within one-carbon metabolism; tetrahydrofolate interconversion. Its function is as follows. Catalyzes the oxidation of 5,10-methylenetetrahydrofolate to 5,10-methenyltetrahydrofolate and then the hydrolysis of 5,10-methenyltetrahydrofolate to 10-formyltetrahydrofolate. This chain is Bifunctional protein FolD 1, found in Deinococcus geothermalis (strain DSM 11300 / CIP 105573 / AG-3a).